An 862-amino-acid chain; its full sequence is MPAGLTEPAGAAPPAAVSASGTVTMAPAGALPVRVESTPVALGAVTKAPVSVCVEPTASQPLRSPVGTLVTKVAPVSAPPKVSSGPRLPAPQIVAVKAPNTTTIQFPANLQLPPGTVLIKSNSGPLMLVSPQQTVTRAETTSNITSRPAVPANPQTVKICTVPNSSSQLIKKVAVTPVKKLAQIGTTVVTTVPKPSSVQSVAVPTSVVTVTPGKPLNTVTTLKPSSLGASSTPSNEPNLKAENSAAVQINLSPTMLENVKKCKNFLAMLIKLACSGSQSPEMGQNVKKLVEQLLDAKIEAEEFTRKLYVELKSSPQPHLVPFLKKSVVALRQLLPNSQSFIQQCVQQTSSDMVIATCTTTVTTSPVVTTTVSSSQSEKSIIVSGATAPRTVSVQTLNPLAGPVGAKAGVVTLHSVGPTAATGGTTAGTGLLQTSKPLVTSVANTVTTVSLQPEKPVVSGTAVTLSLPAVTFGETSGAAICLPSVKPVVSSAGTTSDKPVIGTPVQIKLAQPGPVLSQPAGIPQAVQVKQLVVQQPSGGNEKQVTTISHSSTLTIQKCGQKTMPVNTIIPTSQFPPASILKQITLPGNKILSLQASPTQKNRIKENVTSCFRDEDDINDVTSMAGVNLNEENACILATNSELVGTLIQSCKDEPFLFIGALQKRILDIGKKHDITELNSDAVNLISQATQERLRGLLEKLTAIAQHRMTTYKASENYILCSDTRSQLKFLEKLDQLEKQRKDLEEREMLLKAAKSRSNKEDPEQLRLKQKAKELQQLELAQIQHRDANLTALAAIGPRKKRPLESGIEGLKDNLLASGTSSLTATKQLHRPRITRICLRDLIFCMEQEREMKYSRALYLALLK.

A sufficient for interaction with ZNF628 region spans residues 100–241; that stretch reads NTTTIQFPAN…TPSNEPNLKA (142 aa). Residues 219–237 show a composition bias toward polar residues; the sequence is VTTLKPSSLGASSTPSNEP. The interval 219–239 is disordered; that stretch reads VTTLKPSSLGASSTPSNEPNL. A TAFH domain is found at 256 to 353; sequence LENVKKCKNF…CVQQTSSDMV (98 aa). Residues 511-533 are required for interaction with P65/RELA; it reads PGPVLSQPAGIPQAVQVKQLVVQ. The Nuclear export signal signature appears at 516–556; sequence SQPAGIPQAVQVKQLVVQQPSGGNEKQVTTISHSSTLTIQK. Ser-595 carries the phosphoserine modification. One can recognise a Histone-fold domain in the interval 653-702; sequence PFLFIGALQKRILDIGKKHDITELNSDAVNLISQATQERLRGLLEKLTAI. The stretch at 722 to 787 forms a coiled coil; that stretch reads TRSQLKFLEK…LAQIQHRDAN (66 aa). A required for interaction with TAF12 region spans residues 830–862; that stretch reads PRITRICLRDLIFCMEQEREMKYSRALYLALLK.

Belongs to the TAF4 family. TFIID is composed of TATA binding protein (TBP) and a number of TBP-associated factors (TAFs). Heterodimerizes with TAF12/TFII20 via the C-terminal H2A-like histone-fold domain. This heterodimer forms a histone-like octamer with the TAF6/TAFII70-TAF9/TAFII31 heterodimer. Interacts with P65/RELA homodimers and P65/RELA-REL heterodimers. Interaction with POU2AF1, via its C-terminal activation domain, is required for octamer-dependent transcription. Interacts with ZNF628. Post-translationally, under stimulation by forskolin, Isoform 1 is phosphorylated by protein kinase A (PKA). Preferentially expressed in ovarian granulosa cells (at protein level). Highly expressed in B-cells.

Its subcellular location is the nucleus. The protein resides in the cytoplasm. In terms of biological role, cell type-specific subunit of the general transcription factor TFIID that may function as a gene-selective coactivator in certain cells. TFIID is a multimeric protein complex that plays a central role in mediating promoter responses to various activators and repressors. TAF4B is a transcriptional coactivator of the p65/RELA NF-kappa-B subunit. Involved in the activation of a subset of antiapoptotic genes including TNFAIP3. May be involved in regulating folliculogenesis. Through interaction with OCBA/POU2AF1, acts as a coactivator of B-cell-specific transcription. Plays a role in spermiogenesis and oogenesis. The sequence is that of Transcription initiation factor TFIID subunit 4B (TAF4B) from Homo sapiens (Human).